The chain runs to 408 residues: Putative transporter AmpG 2 (408 aa).

12 helical membrane-spanning segments follow: residues Ile11–Thr31, Ile49–Leu69, Tyr84–Asn104, Thr110–Ile130, Phe154–Trp174, Val177–Leu197, Trp224–Met244, Ile261–Leu281, Val294–Leu311, Ile315–Phe337, Ile353–Tyr373, and Tyr382–Pro402.

This sequence belongs to the major facilitator superfamily.

Its subcellular location is the cell inner membrane. This chain is Putative transporter AmpG 2 (ampG2), found in Rickettsia typhi (strain ATCC VR-144 / Wilmington).